The chain runs to 391 residues: D-alanine--D-alanine ligase (391 aa).

The tract at residues 1–24 (MSSENLPQSPERAESPQAPRRKPR) is disordered. One can recognise an ATP-grasp domain in the interval 171 to 381 (KRVFLSFGLP…YPELVDRLIQ (211 aa)). 207–262 (AGEHGWPLFIKPARGGSSMGITKVDSVEGLDAAIEEARRHDPKFLVESLLRGREIE) provides a ligand contact to ATP. The Mg(2+) site is built by Asp335, Glu348, and Asn350.

Belongs to the D-alanine--D-alanine ligase family. Mg(2+) serves as cofactor. Mn(2+) is required as a cofactor.

Its subcellular location is the cytoplasm. It carries out the reaction 2 D-alanine + ATP = D-alanyl-D-alanine + ADP + phosphate + H(+). The protein operates within cell wall biogenesis; peptidoglycan biosynthesis. Its function is as follows. Cell wall formation. The polypeptide is D-alanine--D-alanine ligase (Streptomyces griseus subsp. griseus (strain JCM 4626 / CBS 651.72 / NBRC 13350 / KCC S-0626 / ISP 5235)).